Consider the following 268-residue polypeptide: Putative ABC transporter ATP-binding protein MK0182 (268 aa).

Positions 1–229 constitute an ABC transporter domain; it reads MTHEYPDGTC…VDLIRESGLK (229 aa). 29–36 is a binding site for ATP; that stretch reads GPNGSGKT.

Belongs to the ABC transporter superfamily.

The protein resides in the cell membrane. In terms of biological role, probably part of an ABC transporter complex. Responsible for energy coupling to the transport system. In Methanopyrus kandleri (strain AV19 / DSM 6324 / JCM 9639 / NBRC 100938), this protein is Putative ABC transporter ATP-binding protein MK0182.